We begin with the raw amino-acid sequence, 1046 residues long: UDP-N-acetylglucosamine--peptide N-acetylglucosaminyltransferase 110 kDa subunit (1046 aa).

At A2 the chain carries N-acetylalanine. 2 positions are modified to phosphoserine; by GSK3-beta; alternate: S3 and S4. O-linked (GlcNAc) serine; alternate glycans are attached at residues S3 and S4. The residue at position 20 (S20) is a Phosphoserine. 12 TPR repeats span residues 21-54 (FQGL…EPDN), 89-122 (AEAY…KPDF), 123-156 (IDGY…NPDL), 157-190 (YCVR…QPNF), 191-224 (AVAW…DPNF), 225-258 (LDAY…SPNH), 259-292 (AVVH…QPHF), 293-326 (PDAY…CPTH), 327-360 (ADSL…FPEF), 361-394 (AAAH…SPTF), 395-428 (ADAY…NPAF), and 429-462 (ADAH…KPDF). S399 carries an O-linked (GlcNAc) serine; by autocatalysis glycan. Residue T454 is modified to Phosphothreonine. A TPR 13; truncated repeat occupies 463 to 473 (PDAYCNLAHCL). Positions 464-466 (DAY) match the DFP motif motif. Residues 487-503 (KKLVSIVADQLEKNRLP) carry the Nuclear localization signal motif. The active-site Proton acceptor is the H508. Residues Q849, K852, 906–908 (APK), 911–914 (HVRR), 930–932 (HTT), and D935 each bind UDP. Y989 bears the Phosphotyrosine mark. The interval 991–1010 (KKIRGKVWKQRISSPLFNTK) is required for phosphatidylinositol 3,4,5-triphosphate binding.

It belongs to the glycosyltransferase 41 family. O-GlcNAc transferase subfamily. In terms of assembly, monomer; may exist in different oligomerization states in cells. Homotrimer, oligomerizes via TPR repeats 6 and 7. Trimerization is not necessary for activity in vitro, however it increases affinity for UDP-GlcNAc. Component of a THAP1/THAP3-HCFC1-OGT complex. Component of the NSL complex at least composed of MOF/KAT8, KANSL1, KANSL2, KANSL3, MCRS1, PHF20, OGT1/OGT, WDR5 and HCFC1. Found in a complex with KIF5B, RHOT1, RHOT2 and TRAK1. Found in a complex composed of at least SINHCAF, SIN3A, HDAC1, SAP30, RBBP4, OGT and TET1. Component of a complex composed of KMT2E/MLL5, OGT and USP7; the complex stabilizes KMT2E/MLL5, preventing KMT2E/MLL5 ubiquitination and proteasomal-mediated degradation. Interacts (via TPRs 1-6) with SIN3A; the interaction mediates transcriptional repression in parallel with histone deacetylase. Interacts (via TPR 5-6) with TET1, TET2 and TET3. Interacts (via TPR repeats 6 and 7) with ATXN10. Interacts with NSD2. Interacts with PROSER1; this interaction mediates TET2 O-GlcNAcylation and stability by promoting the interaction between OGT and TET2. In terms of processing, ubiquitinated by the SCF(FBXO31) complex, leading to its proteasomal degradation. Post-translationally, phosphorylation on Ser-3 or Ser-4 by GSK3-beta positively regulates its activity. Phosphorylation at Thr-454 by AMPK promotes nuclear localization. Glycosylated via autocatalysis; O-GlcNAcylation at Ser-399 promotes nuclear localization.

The protein localises to the nucleus. It localises to the cytoplasm. The enzyme catalyses L-seryl-[protein] + UDP-N-acetyl-alpha-D-glucosamine = 3-O-(N-acetyl-beta-D-glucosaminyl)-L-seryl-[protein] + UDP + H(+). It carries out the reaction L-threonyl-[protein] + UDP-N-acetyl-alpha-D-glucosamine = 3-O-(N-acetyl-beta-D-glucosaminyl)-L-threonyl-[protein] + UDP + H(+). It participates in protein modification; protein glycosylation. Inhibited by UDP. Its function is as follows. Catalyzes the transfer of a single N-acetylglucosamine from UDP-GlcNAc to a serine or threonine residue in cytoplasmic and nuclear proteins resulting in their modification with a beta-linked N-acetylglucosamine (O-GlcNAc). Glycosylates a large and diverse number of proteins including histone H2B, AKT1, AMPK, ATG4B, CAPRIN1, EZH2, FNIP1, GSDMD, KRT7, LMNA, LMNB1, LMNB2, RPTOR, HOXA1, PFKL, KMT2E/MLL5, MAPT/TAU, TET2, RBL2, RET, NOD2 and HCFC1. Can regulate their cellular processes via cross-talk between glycosylation and phosphorylation or by affecting proteolytic processing. Involved in insulin resistance in muscle and adipocyte cells via glycosylating insulin signaling components and inhibiting the 'Thr-308' phosphorylation of AKT1, enhancing IRS1 phosphorylation and attenuating insulin signaling. Involved in glycolysis regulation by mediating glycosylation of 6-phosphofructokinase PFKL, inhibiting its activity. Plays a key role in chromatin structure by mediating O-GlcNAcylation of 'Ser-112' of histone H2B: recruited to CpG-rich transcription start sites of active genes via its interaction with TET proteins (TET1, TET2 or TET3). As part of the NSL complex indirectly involved in acetylation of nucleosomal histone H4 on several lysine residues. O-GlcNAcylation of 'Ser-75' of EZH2 increases its stability, and facilitating the formation of H3K27me3 by the PRC2/EED-EZH2 complex. Stabilizes KMT2E/MLL5 by mediating its glycosylation, thereby preventing KMT2E/MLL5 ubiquitination. Regulates circadian oscillation of the clock genes and glucose homeostasis in the liver. Stabilizes clock proteins BMAL1 and CLOCK through O-glycosylation, which prevents their ubiquitination and subsequent degradation. Promotes the CLOCK-BMAL1-mediated transcription of genes in the negative loop of the circadian clock such as PER1/2 and CRY1/2. O-glycosylates HCFC1 and regulates its proteolytic processing and transcriptional activity. Component of a THAP1/THAP3-HCFC1-OGT complex that is required for the regulation of the transcriptional activity of RRM1. Regulates mitochondrial motility in neurons by mediating glycosylation of TRAK1. Promotes autophagy by mediating O-glycosylation of ATG4B. Acts as a regulator of mTORC1 signaling by mediating O-glycosylation of RPTOR and FNIP1: O-GlcNAcylation of RPTOR in response to glucose sufficiency promotes activation of the mTORC1 complex. Catalyzes the transfer of a single N-acetylglucosamine from UDP-GlcNAc to a serine or threonine residue. Acts on cytoplasmic and nuclear proteins resulting in their modification with a beta-linked N-acetylglucosamine (O-GlcNAc). Glycosylates a large and diverse number of proteins including histone H2B, AKT1, ATG4B, EZH2, PFKL, KMT2E/MLL5, MAPT/TAU, NOD2 and HCFC1. Can regulate their cellular processes via cross-talk between glycosylation and phosphorylation or by affecting proteolytic processing. Probably by glycosylating KMT2E/MLL5, stabilizes KMT2E/MLL5 by preventing its ubiquitination. Involved in insulin resistance in muscle and adipocyte cells via glycosylating insulin signaling components and inhibiting the 'Thr-308' phosphorylation of AKT1, enhancing IRS1 phosphorylation and attenuating insulin signaling. Involved in glycolysis regulation by mediating glycosylation of 6-phosphofructokinase PFKL, inhibiting its activity. Component of a THAP1/THAP3-HCFC1-OGT complex that is required for the regulation of the transcriptional activity of RRM1. Plays a key role in chromatin structure by mediating O-GlcNAcylation of 'Ser-112' of histone H2B: recruited to CpG-rich transcription start sites of active genes via its interaction with TET proteins (TET1, TET2 or TET3). As part of the NSL complex indirectly involved in acetylation of nucleosomal histone H4 on several lysine residues. O-GlcNAcylation of 'Ser-75' of EZH2 increases its stability, and facilitating the formation of H3K27me3 by the PRC2/EED-EZH2 complex. Regulates circadian oscillation of the clock genes and glucose homeostasis in the liver. Stabilizes clock proteins BMAL1 and CLOCK through O-glycosylation, which prevents their ubiquitination and subsequent degradation. Promotes the CLOCK-BMAL1-mediated transcription of genes in the negative loop of the circadian clock such as PER1/2 and CRY1/2. O-glycosylates HCFC1 and regulates its proteolytic processing and transcriptional activity. Regulates mitochondrial motility in neurons by mediating glycosylation of TRAK1. Glycosylates HOXA1. O-glycosylates FNIP1. Promotes autophagy by mediating O-glycosylation of ATG4B. The chain is UDP-N-acetylglucosamine--peptide N-acetylglucosaminyltransferase 110 kDa subunit (OGT) from Oryctolagus cuniculus (Rabbit).